Here is an 87-residue protein sequence, read N- to C-terminus: Small ribosomal subunit protein bS20 (87 aa).

Residues 1-27 form a disordered region; it reads MANIKSAKKRALQSEKRRQHNASRRSM.

Belongs to the bacterial ribosomal protein bS20 family.

Its function is as follows. Binds directly to 16S ribosomal RNA. In Aeromonas hydrophila subsp. hydrophila (strain ATCC 7966 / DSM 30187 / BCRC 13018 / CCUG 14551 / JCM 1027 / KCTC 2358 / NCIMB 9240 / NCTC 8049), this protein is Small ribosomal subunit protein bS20.